Reading from the N-terminus, the 141-residue chain is Transmembrane protein 216 (141 aa).

A run of 4 helical transmembrane segments spans residues 15–35, 49–69, 82–102, and 115–135; these read VLFF…LLIF, LVLD…RLFF, LGIS…YLLL, and SILL…LATF.

Part of the tectonic-like complex (also named B9 complex). Interacts with TMEM107.

The protein localises to the membrane. Its subcellular location is the cytoplasm. The protein resides in the cytoskeleton. It is found in the cilium basal body. In terms of biological role, part of the tectonic-like complex which is required for tissue-specific ciliogenesis and may regulate ciliary membrane composition. The protein is Transmembrane protein 216 (Tmem216) of Mus musculus (Mouse).